A 107-amino-acid chain; its full sequence is Probable monothiol glutaredoxin 2 (107 aa).

Positions 7–107 (LEFIQNAIKK…LEKMLKDVVV (101 aa)) constitute a Glutaredoxin domain. Lysine 24 lines the glutathione pocket. Cysteine 32 serves as a coordination point for [2Fe-2S] cluster. Glutathione-binding positions include arginine 61, phenylalanine 73, and 86–87 (CD).

It belongs to the glutaredoxin family. Monothiol subfamily.

This Rickettsia prowazekii (strain Madrid E) protein is Probable monothiol glutaredoxin 2 (grxC2).